The sequence spans 354 residues: Guanine nucleotide-binding protein G(t) subunit alpha-2 (354 aa).

The interval 1-27 (MGSGASAEDKELAKRSKELEKKLQEDA) is disordered. Residue Gly2 is the site of N-myristoyl glycine attachment. The segment covering 7-27 (AEDKELAKRSKELEKKLQEDA) has biased composition (basic and acidic residues). Positions 32–354 (KTVKLLLLGA…KENLKDCGLF (323 aa)) constitute a G-alpha domain. A G1 motif region spans residues 35 to 48 (KLLLLGAGESGKST). GTP-binding positions include 40 to 47 (GAGESGKS), 175 to 181 (LRSRVKT), 200 to 204 (DVGGQ), 269 to 272 (NKKD), and Ala326. Ser47 provides a ligand contact to Mg(2+). Residues 173–181 (DVLRSRVKT) form a G2 motif region. Arg178 carries the post-translational modification ADP-ribosylarginine; by cholera toxin. Position 181 (Thr181) interacts with Mg(2+). Residues 196 to 205 (FRMFDVGGQR) form a G3 motif region. The segment at 265–272 (VLFLNKKD) is G4 motif. A G5 motif region spans residues 324–329 (TCATDT). An ADP-ribosylcysteine; by pertussis toxin modification is found at Cys351.

The protein belongs to the G-alpha family. G(i/o/t/z) subfamily. In terms of assembly, g proteins are composed of 3 units; alpha, beta and gamma. The alpha chain contains the guanine nucleotide binding site. Retinal rod outer segment.

The protein resides in the cell projection. Its subcellular location is the cilium. The protein localises to the photoreceptor outer segment. It localises to the photoreceptor inner segment. In terms of biological role, guanine nucleotide-binding proteins (G proteins) are involved as modulators or transducers in various transmembrane signaling systems. Transducin is an amplifier and one of the transducers of a visual impulse that performs the coupling between rhodopsin and cGMP-phosphodiesterase. This chain is Guanine nucleotide-binding protein G(t) subunit alpha-2 (GNAT2), found in Homo sapiens (Human).